Consider the following 221-residue polypeptide: Probable transaldolase (221 aa).

The active-site Schiff-base intermediate with substrate is the K87.

It belongs to the transaldolase family. Type 3B subfamily.

The protein localises to the cytoplasm. The catalysed reaction is D-sedoheptulose 7-phosphate + D-glyceraldehyde 3-phosphate = D-erythrose 4-phosphate + beta-D-fructose 6-phosphate. It functions in the pathway carbohydrate degradation; pentose phosphate pathway; D-glyceraldehyde 3-phosphate and beta-D-fructose 6-phosphate from D-ribose 5-phosphate and D-xylulose 5-phosphate (non-oxidative stage): step 2/3. Functionally, transaldolase is important for the balance of metabolites in the pentose-phosphate pathway. The polypeptide is Probable transaldolase (Syntrophobacter fumaroxidans (strain DSM 10017 / MPOB)).